The chain runs to 276 residues: Mitochondrial distribution and morphology protein 12 (276 aa).

Residues Met1 to Tyr276 form the SMP-LTD domain. The tract at residues Thr68–Lys104 is disordered. Residues Ser75 to Met89 show a composition bias toward acidic residues.

The protein belongs to the MDM12 family. As to quaternary structure, component of the ER-mitochondria encounter structure (ERMES) or MDM complex, composed of mmm1, mdm10, mdm12 and mdm34. A mmm1 homodimer associates with one molecule of mdm12 on each side in a pairwise head-to-tail manner, and the SMP-LTD domains of mmm1 and mdm12 generate a continuous hydrophobic tunnel for phospholipid trafficking.

The protein localises to the mitochondrion outer membrane. Its subcellular location is the endoplasmic reticulum membrane. In terms of biological role, component of the ERMES/MDM complex, which serves as a molecular tether to connect the endoplasmic reticulum (ER) and mitochondria. Components of this complex are involved in the control of mitochondrial shape and protein biogenesis, and function in nonvesicular lipid trafficking between the ER and mitochondria. Mdm12 is required for the interaction of the ER-resident membrane protein mmm1 and the outer mitochondrial membrane-resident beta-barrel protein mdm10. The mdm12-mmm1 subcomplex functions in the major beta-barrel assembly pathway that is responsible for biogenesis of all mitochondrial outer membrane beta-barrel proteins, and acts in a late step after the SAM complex. The mdm10-mdm12-mmm1 subcomplex further acts in the TOM40-specific pathway after the action of the mdm12-mmm1 complex. Essential for establishing and maintaining the structure of mitochondria and maintenance of mtDNA nucleoids. The protein is Mitochondrial distribution and morphology protein 12 of Schizosaccharomyces japonicus (strain yFS275 / FY16936) (Fission yeast).